Reading from the N-terminus, the 632-residue chain is ATP-dependent zinc metalloprotease FtsH (632 aa).

The Cytoplasmic segment spans residues 1–9 (MKPTNEPKK). A helical membrane pass occupies residues 10–30 (PFFQSPIILAVLGGILLIFFL). Over 31–116 (RSFNSDGSFS…INYSGFSESN (86 aa)) the chain is Periplasmic. A helical membrane pass occupies residues 117–137 (FFTDMLGWLMPILVILGLWMF). Residues 138–632 (MANRMQKNMG…RLIPLEEQAS (495 aa)) lie on the Cytoplasmic side of the membrane. ATP is bound by residues A173, 213 to 217 (GTGKT), and H354. A Zn(2+)-binding site is contributed by H434. Residue E435 is part of the active site. Residues H438 and D511 each coordinate Zn(2+).

The protein in the central section; belongs to the AAA ATPase family. This sequence in the C-terminal section; belongs to the peptidase M41 family. In terms of assembly, homohexamer. Zn(2+) is required as a cofactor.

The protein localises to the cell inner membrane. In terms of biological role, acts as a processive, ATP-dependent zinc metallopeptidase for both cytoplasmic and membrane proteins. Plays a role in the quality control of integral membrane proteins. This Helicobacter pylori (strain ATCC 700392 / 26695) (Campylobacter pylori) protein is ATP-dependent zinc metalloprotease FtsH.